The following is a 107-amino-acid chain: Ig kappa chain V-VI region NQ5-78.2.6 (107 aa).

Residues 1 to 23 (QILLTQSPAIMSASPGQKVTMTC) are framework-1. Residues C23 and C87 are joined by a disulfide bond. Positions 24–33 (SASSSVSYMH) are complementarity-determining-1. The interval 34–48 (WYQQKSGTSPKRWIY) is framework-2. The interval 49–55 (DTSKLAS) is complementarity-determining-2. The tract at residues 56-87 (GVPARFXGSGSATSYSLTITSMQAEDAATYYC) is framework-3. Residues 88–96 (QQWSSNPLT) form a complementarity-determining-3 region. Residues 97 to 106 (FGSGTKLEXK) are framework-4.

In terms of biological role, anti-2-phenyl oxazolone (PHOX) Antibody. This Mus musculus (Mouse) protein is Ig kappa chain V-VI region NQ5-78.2.6.